Here is a 263-residue protein sequence, read N- to C-terminus: Peptide methionine sulfoxide reductase A4, chloroplastic (263 aa).

The N-terminal 75 residues, 1 to 75, are a transit peptide targeting the chloroplast; that stretch reads MPPLLASTSS…GLGGLGGSPR (75 aa).

Belongs to the MsrA Met sulfoxide reductase family. As to expression, expressed in roots, stems, leaves and flowers.

The protein localises to the plastid. It is found in the chloroplast. The enzyme catalyses L-methionyl-[protein] + [thioredoxin]-disulfide + H2O = L-methionyl-(S)-S-oxide-[protein] + [thioredoxin]-dithiol. It catalyses the reaction [thioredoxin]-disulfide + L-methionine + H2O = L-methionine (S)-S-oxide + [thioredoxin]-dithiol. Catalyzes the reduction of methionine sulfoxide (MetSO) to methionine in proteins. Involved in abiotic and salt stress responses. Plays a protective role against oxidative stress by restoring activity to proteins that have been inactivated by methionine oxidation. MSRA family specifically reduces the MetSO S-enantiomer. The polypeptide is Peptide methionine sulfoxide reductase A4, chloroplastic (Oryza sativa subsp. japonica (Rice)).